Here is a 100-residue protein sequence, read N- to C-terminus: NADH-quinone oxidoreductase subunit K (100 aa).

The next 3 helical transmembrane spans lie at 4–24, 28–48, and 61–81; these read FEYY…GVII, IIAM…AFVA, and FVFF…GLII.

It belongs to the complex I subunit 4L family. As to quaternary structure, NDH-1 is composed of 14 different subunits. Subunits NuoA, H, J, K, L, M, N constitute the membrane sector of the complex.

The protein localises to the cell inner membrane. It carries out the reaction a quinone + NADH + 5 H(+)(in) = a quinol + NAD(+) + 4 H(+)(out). Functionally, NDH-1 shuttles electrons from NADH, via FMN and iron-sulfur (Fe-S) centers, to quinones in the respiratory chain. The immediate electron acceptor for the enzyme in this species is believed to be ubiquinone. Couples the redox reaction to proton translocation (for every two electrons transferred, four hydrogen ions are translocated across the cytoplasmic membrane), and thus conserves the redox energy in a proton gradient. In Sulfurihydrogenibium sp. (strain YO3AOP1), this protein is NADH-quinone oxidoreductase subunit K.